A 515-amino-acid polypeptide reads, in one-letter code: uncharacterized protein (515 aa).

The tract at residues serine 146–glutamine 171 is disordered. The segment covering glutamate 148–asparagine 162 has biased composition (basic and acidic residues).

Its subcellular location is the cytoplasm. The protein localises to the nucleus. This is an uncharacterized protein from Schizosaccharomyces pombe (strain 972 / ATCC 24843) (Fission yeast).